The sequence spans 1528 residues: DNA topoisomerase 2-alpha (1528 aa).

M1 bears the N-acetylmethionine mark. A Phosphoserine modification is found at S4. K17 is covalently cross-linked (Glycyl lysine isopeptide (Lys-Gly) (interchain with G-Cter in SUMO2)). Residues N90, N119, and S147–N149 each bind ATP. Residues K155 and K156 each participate in a glycyl lysine isopeptide (Lys-Gly) (interchain with G-Cter in SUMO2) cross-link. Residue G160–K167 participates in ATP binding. T281 bears the Phosphothreonine mark. The segment at K341–K343 is interaction with DNA. K351 is covalently cross-linked (Glycyl lysine isopeptide (Lys-Gly) (interchain with G-Cter in SUMO2)). Q375–K377 provides a ligand contact to ATP. Residues K385, K396, K415, K417, K424, and K439 each participate in a glycyl lysine isopeptide (Lys-Gly) (interchain with G-Cter in SUMO2) cross-link. Residues C454–E571 form the Toprim domain. E460 serves as a coordination point for Mg(2+). Residues K465, K479, and K528 each participate in a glycyl lysine isopeptide (Lys-Gly) (interchain with G-Cter in SUMO2) cross-link. The Mg(2+) site is built by D540 and D542. Glycyl lysine isopeptide (Lys-Gly) (interchain with G-Cter in SUMO2) cross-links involve residues K583, K598, K613, K621, K624, K631, K638, K654, K661, and K675. Residues I714–L1168 form the Topo IIA-type catalytic domain. Y804 serves as the catalytic O-(5'-phospho-DNA)-tyrosine intermediate. The segment at K989–S998 is interaction with DNA. A Glycyl lysine isopeptide (Lys-Gly) (interchain with G-Cter in SUMO2) cross-link involves residue K1074. Disordered stretches follow at residues K1090–A1118 and K1183–S1211. Residues D1098–T1107 are compositionally biased toward acidic residues. S1105 is subject to Phosphoserine; by CK1. The segment covering E1108–A1118 has biased composition (low complexity). Residues K1193 and K1201 each participate in a glycyl lysine isopeptide (Lys-Gly) (interchain with G-Cter in SUMO2) cross-link. Residue S1211 is modified to Phosphoserine. K1226 is covalently cross-linked (Glycyl lysine isopeptide (Lys-Gly) (interchain with G-Cter in SUMO2)). The disordered stretch occupies residues A1229–F1528. K1238 is covalently cross-linked (Glycyl lysine isopeptide (Lys-Gly) (interchain with G-Cter in SUMO1); alternate). Residue K1238 forms a Glycyl lysine isopeptide (Lys-Gly) (interchain with G-Cter in SUMO2); alternate linkage. T1245 carries the phosphothreonine modification. A compositionally biased stretch (basic and acidic residues) spans Q1258–A1270. Glycyl lysine isopeptide (Lys-Gly) (interchain with G-Cter in SUMO2) cross-links involve residues K1272, K1279, and K1282. 4 positions are modified to phosphoserine: S1291, S1293, S1295, and S1298. Positions D1296–V1306 are enriched in low complexity. Phosphothreonine is present on T1323. Residues L1326 to L1345 are compositionally biased toward acidic residues. Phosphoserine occurs at positions 1328 and 1333. T1350 bears the Phosphothreonine mark. Residues K1359 and K1363 each participate in a glycyl lysine isopeptide (Lys-Gly) (interchain with G-Cter in SUMO2) cross-link. Phosphoserine is present on residues S1370 and S1373. Residue K1382 forms a Glycyl lysine isopeptide (Lys-Gly) (interchain with G-Cter in SUMO2) linkage. Phosphoserine occurs at positions 1384 and 1388. K1418 is covalently cross-linked (Glycyl lysine isopeptide (Lys-Gly) (interchain with G-Cter in SUMO2); alternate). K1418 bears the N6-acetyllysine; alternate mark. The tract at residues K1429–K1435 is interaction with PLSCR1. K1438 is covalently cross-linked (Glycyl lysine isopeptide (Lys-Gly) (interchain with G-Cter in SUMO2); alternate). N6-acetyllysine; alternate is present on K1438. Glycyl lysine isopeptide (Lys-Gly) (interchain with G-Cter in SUMO2) cross-links involve residues K1450 and K1455. Residues S1465, S1467, S1470, and S1472 each carry the phosphoserine modification. Residues K1480 and K1488 each participate in a glycyl lysine isopeptide (Lys-Gly) (interchain with G-Cter in SUMO2) cross-link. A compositionally biased stretch (basic and acidic residues) spans A1506 to E1519. A Phosphoserine modification is found at S1521.

This sequence belongs to the type II topoisomerase family. In terms of assembly, homodimer. Interacts with COPS5. Interacts with RECQL5; this stimulates DNA decatenation. Interacts with SETMAR; stimulates the topoisomerase activity. Interacts with DHX9; this interaction occurs in a E2 enzyme UBE2I- and RNA-dependent manner, negatively regulates DHX9-mediated double-stranded DNA and RNA duplex helicase activity and stimulates TOP2A-mediated supercoiled DNA relaxation activity. Interacts with HNRNPU (via C-terminus); this interaction protects the topoisomerase TOP2A from degradation and positively regulates the relaxation of supercoiled DNA in a RNA-dependent manner. Interacts with MCM3AP. Interacts with ERCC6. Interacts with PLSCR1. Interacts with GCNA; this interaction allows the resolution of topoisomerase II (TOP2A) DNA-protein cross-links. Interacts with POL1RA/RPA1 (via dock II) and UBTF in the context of Pol I complex; may assist Pol I transcription initiation by releasing supercoils occurring during DNA unwinding. Interacts with TPRN; TPRN interacts with a number of DNA damage response proteins, is recruited to sites of DNA damage and may play a role in DNA damage repair. Mg(2+) serves as cofactor. It depends on Mn(2+) as a cofactor. Ca(2+) is required as a cofactor. Post-translationally, phosphorylation has no effect on catalytic activity. However, phosphorylation at Ser-1105 by CSNK1D/CK1 promotes DNA cleavable complex formation.

The protein resides in the cytoplasm. It localises to the nucleus. The protein localises to the nucleoplasm. Its subcellular location is the nucleolus. It carries out the reaction ATP-dependent breakage, passage and rejoining of double-stranded DNA.. Functionally, key decatenating enzyme that alters DNA topology by binding to two double-stranded DNA molecules, generating a double-stranded break in one of the strands, passing the intact strand through the broken strand, and religating the broken strand. May play a role in regulating the period length of BMAL1 transcriptional oscillation. This chain is DNA topoisomerase 2-alpha (Top2a), found in Mus musculus (Mouse).